The following is a 289-amino-acid chain: Type III pantothenate kinase (289 aa).

Aspartate 9 to lysine 16 provides a ligand contact to ATP. Substrate-binding positions include tyrosine 106 and glycine 113–arginine 116. Residue aspartate 115 is the Proton acceptor of the active site. Residue threonine 139 participates in ATP binding. Substrate is bound at residue threonine 209.

The protein belongs to the type III pantothenate kinase family. Homodimer. The cofactor is NH4(+). K(+) is required as a cofactor.

Its subcellular location is the cytoplasm. It catalyses the reaction (R)-pantothenate + ATP = (R)-4'-phosphopantothenate + ADP + H(+). It participates in cofactor biosynthesis; coenzyme A biosynthesis; CoA from (R)-pantothenate: step 1/5. In terms of biological role, catalyzes the phosphorylation of pantothenate (Pan), the first step in CoA biosynthesis. The chain is Type III pantothenate kinase from Paraburkholderia phymatum (strain DSM 17167 / CIP 108236 / LMG 21445 / STM815) (Burkholderia phymatum).